An 82-amino-acid chain; its full sequence is Small ribosomal subunit protein uS17 (82 aa).

Belongs to the universal ribosomal protein uS17 family. In terms of assembly, part of the 30S ribosomal subunit.

Its function is as follows. One of the primary rRNA binding proteins, it binds specifically to the 5'-end of 16S ribosomal RNA. The sequence is that of Small ribosomal subunit protein uS17 from Xanthobacter autotrophicus (strain ATCC BAA-1158 / Py2).